A 355-amino-acid polypeptide reads, in one-letter code: Neutral protease 2 homolog MEP6 (355 aa).

The N-terminal stretch at 1 to 19 (MRLSSSLIALVALAGQALA) is a signal peptide. A propeptide spanning residues 20 to 179 (LPFNELAERD…ASAIPELNKR (160 aa)) is cleaved from the precursor. 2 disulfides stabilise this stretch: Cys187/Cys259 and Cys266/Cys283. His307 contacts Zn(2+). Glu308 is an active-site residue. Residues His311 and Asp322 each contribute to the Zn(2+) site.

This sequence belongs to the peptidase M35 family. Zn(2+) is required as a cofactor.

Its subcellular location is the secreted. It carries out the reaction Preferential cleavage of bonds with hydrophobic residues in P1'. Also 3-Asn-|-Gln-4 and 8-Gly-|-Ser-9 bonds in insulin B chain.. Functionally, secreted metalloproteinase that allows assimilation of proteinaceous substrates. Shows high activities on basic nuclear substrates such as histone and protamine. May be involved in virulence. The chain is Neutral protease 2 homolog MEP6 (MEP6) from Coccidioides posadasii (strain C735) (Valley fever fungus).